A 462-amino-acid chain; its full sequence is Cysteine--tRNA ligase (462 aa).

Cys-29 lines the Zn(2+) pocket. Positions 31–41 (PTVYDHAHIGN) match the 'HIGH' region motif. Zn(2+) is bound by residues Cys-214, His-239, and Glu-243. Residues 272–276 (KMSKS) carry the 'KMSKS' region motif. Lys-275 lines the ATP pocket.

This sequence belongs to the class-I aminoacyl-tRNA synthetase family. In terms of assembly, monomer. Requires Zn(2+) as cofactor.

It is found in the cytoplasm. The enzyme catalyses tRNA(Cys) + L-cysteine + ATP = L-cysteinyl-tRNA(Cys) + AMP + diphosphate. This Azorhizobium caulinodans (strain ATCC 43989 / DSM 5975 / JCM 20966 / LMG 6465 / NBRC 14845 / NCIMB 13405 / ORS 571) protein is Cysteine--tRNA ligase.